Consider the following 158-residue polypeptide: 2-C-methyl-D-erythritol 2,4-cyclodiphosphate synthase (158 aa).

A divalent metal cation-binding residues include Asp9 and His11. Residues Asp9–His11 and His35–Ser36 each bind 4-CDP-2-C-methyl-D-erythritol 2-phosphate. His43 serves as a coordination point for a divalent metal cation. 4-CDP-2-C-methyl-D-erythritol 2-phosphate-binding positions include Asp57–Gly59 and Arg143.

Belongs to the IspF family. In terms of assembly, homotrimer. A divalent metal cation is required as a cofactor.

The enzyme catalyses 4-CDP-2-C-methyl-D-erythritol 2-phosphate = 2-C-methyl-D-erythritol 2,4-cyclic diphosphate + CMP. Its pathway is isoprenoid biosynthesis; isopentenyl diphosphate biosynthesis via DXP pathway; isopentenyl diphosphate from 1-deoxy-D-xylulose 5-phosphate: step 4/6. In terms of biological role, involved in the biosynthesis of isopentenyl diphosphate (IPP) and dimethylallyl diphosphate (DMAPP), two major building blocks of isoprenoid compounds. Catalyzes the conversion of 4-diphosphocytidyl-2-C-methyl-D-erythritol 2-phosphate (CDP-ME2P) to 2-C-methyl-D-erythritol 2,4-cyclodiphosphate (ME-CPP) with a corresponding release of cytidine 5-monophosphate (CMP). The polypeptide is 2-C-methyl-D-erythritol 2,4-cyclodiphosphate synthase (Chromobacterium violaceum (strain ATCC 12472 / DSM 30191 / JCM 1249 / CCUG 213 / NBRC 12614 / NCIMB 9131 / NCTC 9757 / MK)).